A 680-amino-acid polypeptide reads, in one-letter code: Transketolase 1 (680 aa).

Histidine 30 serves as a coordination point for substrate. Thiamine diphosphate-binding positions include histidine 69 and 116 to 118 (GPL). Aspartate 157 is a binding site for Mg(2+). Glycine 158 and asparagine 187 together coordinate thiamine diphosphate. Mg(2+)-binding residues include asparagine 187 and isoleucine 189. Residue histidine 263 coordinates substrate. Histidine 263 contacts thiamine diphosphate. A phosphoserine mark is found at serine 286 and serine 335. Substrate is bound by residues arginine 359 and serine 386. Serine 402 carries the post-translational modification Phosphoserine. 2 residues coordinate thiamine diphosphate: glutamate 418 and phenylalanine 445. Glutamate 418 serves as the catalytic Proton donor. Substrate is bound by residues histidine 469 and aspartate 477. Serine 492 is subject to Phosphoserine. Arginine 528 contacts substrate. A Glycyl lysine isopeptide (Lys-Gly) (interchain with G-Cter in ubiquitin) cross-link involves residue lysine 647.

It belongs to the transketolase family. Homodimer. Requires Mg(2+) as cofactor. Ca(2+) serves as cofactor. Mn(2+) is required as a cofactor. It depends on Co(2+) as a cofactor. The cofactor is thiamine diphosphate.

The enzyme catalyses D-sedoheptulose 7-phosphate + D-glyceraldehyde 3-phosphate = aldehydo-D-ribose 5-phosphate + D-xylulose 5-phosphate. Catalyzes the transfer of a two-carbon ketol group from a ketose donor to an aldose acceptor, via a covalent intermediate with the cofactor thiamine pyrophosphate. The chain is Transketolase 1 (TKL1) from Saccharomyces cerevisiae (strain ATCC 204508 / S288c) (Baker's yeast).